Here is a 104-residue protein sequence, read N- to C-terminus: Large ribosomal subunit protein uL15z (104 aa).

It belongs to the universal ribosomal protein uL15 family.

This is Large ribosomal subunit protein uL15z (RPL27AA) from Arabidopsis thaliana (Mouse-ear cress).